Here is a 438-residue protein sequence, read N- to C-terminus: Protein pop-1 (438 aa).

A disordered region spans residues 1-39 (MMADEELGDEVKVFRRDEDADDDPMISGETSEQQLADDK). A sufficient for interaction with beta-catenin/sys-1 region spans residues 1-45 (MMADEELGDEVKVFRRDEDADDDPMISGETSEQQLADDKKEAVME). A compositionally biased stretch (basic and acidic residues) spans 9 to 18 (DEVKVFRRDE). The tract at residues 88-130 (AALPMFMPLFMNPYAAALRSPSLMFPMGAMSPTFPMFPPSPVY) is involved in nuclear asymmetry. Ser118 and Ser127 each carry phosphoserine; by LIT1. Residues 192 to 262 (VKKPLNAFMW…THKERYPEWS (71 aa)) constitute a DNA-binding region (HMG box). A compositionally biased stretch (basic and acidic residues) spans 250-263 (DKETHKERYPEWSA). 3 disordered regions span residues 250-288 (DKETHKERYPEWSARENYAVNKKKTKKRRDKSIPSENND), 318-351 (TDRSGGSDITDSQDGRGTSGAYSSSSESPSPKAN), and 378-438 (TTGA…MCTI). A compositionally biased stretch (basic residues) spans 270 to 279 (NKKKTKKRRD). Polar residues-rich tracts occupy residues 324 to 339 (SDITDSQDGRGTSGAY) and 378 to 395 (TTGASTHVPSPLASSSAG). The segment covering 406 to 418 (SESDVEEEEDEQI) has biased composition (acidic residues).

Belongs to the TCF/LEF family. Interacts (via N-terminal region) with beta-catenin homolog sys-1. Interacts with hda-1. Interacts with bar-1. Interacts with par-5; the interaction is direct and is enhanced by lit-1-mediated pop-1 phosphorylation. The interaction also leads to the subsequent nuclear export of pop-1. Interacts (when phosphorylated on Ser-118 and Ser-127) with lit-1; the interaction is dependent on the beta-catenin-lit-1 complex. Interacts with wrm-1. Interacts with homeobox protein egl-5. Interacts with zinc finger transcription factor ref-2; the interaction is direct and facilitates transcriptional activation; transcription may be repressed by beta-catenin/sys-1. Phosphorylated on Ser-118 and Ser-127 by lit-1 in the beta-catenin-lit-1 complex. Phosphorylation promotes the interaction of pop-1 and par-5 and the subsequent translocation of pop-1 from the nucleus to the cytoplasm.

The protein resides in the nucleus. The protein localises to the cytoplasm. Functionally, transcription factor. Part of the Wnt signaling asymmetry pathway. Binds to the consensus sequence, 5'-(C/T)TTTG(A/T)(A/T)(G/C)-3'. Activates or represses target gene expression, depending on upstream Wnt signals and interactions with transcription co-regulators, such as beta-catenin/sys-1 or zinc finger transcription factor ref-2. Essential for the specification of the mesodermal and endodermal cell fates in early embryos. Required in many asymmetrical cell divisions in the early embryo and during larval development. Reciprocal distribution patterns of sys-1 and pop-1 in the daughters of anterior-posterior cell divisions functions in specifying cell fate; a higher sys-1 to pop-1 ratio promotes the posterior cell fate, whereas a low sys-1 to pop-1 ratio promotes the anterior fate. Involved in modulating nuclear localization or nuclear retention of sys-1. Involved in the terminal asymmetrical division of many embryonic neuroblasts; for example in the SMDD/AIY neuron lineage. In complex with ref-2, positively modulates expression of LIM/homeobox protein ttx-3 in anterior daughter cells of the SMDD/AIY lineage. Required for asymmetrical division of somatic gonadal precursor descendants which initiate axis formation required to control organ shape. Similarly, involved in asymmetrical division of seam cells, a stem cell-like lineage. Represses expression of target genes via its interaction with hda-1 histone deacetylase. Required for specification of the M lineage-derived coelomocyte and sex myoblast fate. Regulates coelomocyte fate by positively regulating proliferation and ceh-34 and possibly eya-1 expression in M.dlpa and M.drpa precursors. The polypeptide is Protein pop-1 (Caenorhabditis elegans).